Here is a 144-residue protein sequence, read N- to C-terminus: Putative RNase YutE (144 aa).

Residue Arg-96 is part of the active site. The short motif at 96-103 (RKTLVQQY) is the RX(4)HXY motif element.

It belongs to the HepT RNase toxin family. As to quaternary structure, homodimer, probably forms a complex with cognate antitoxin YutD.

Its function is as follows. Probable toxic component of a putative type VII toxin-antitoxin (TA) system, probably an RNase. Probably neutralized by cognate antitoxin YutD. The chain is Putative RNase YutE (yutE) from Bacillus subtilis (strain 168).